We begin with the raw amino-acid sequence, 471 residues long: Glutamate--tRNA ligase (471 aa).

The 'HIGH' region motif lies at proline 9–glycine 19. Zn(2+) is bound by residues cysteine 98, cysteine 100, cysteine 125, and histidine 127. The short motif at lysine 237–arginine 241 is the 'KMSKS' region element. Position 240 (lysine 240) interacts with ATP.

It belongs to the class-I aminoacyl-tRNA synthetase family. Glutamate--tRNA ligase type 1 subfamily. In terms of assembly, monomer. The cofactor is Zn(2+).

It is found in the cytoplasm. It carries out the reaction tRNA(Glu) + L-glutamate + ATP = L-glutamyl-tRNA(Glu) + AMP + diphosphate. In terms of biological role, catalyzes the attachment of glutamate to tRNA(Glu) in a two-step reaction: glutamate is first activated by ATP to form Glu-AMP and then transferred to the acceptor end of tRNA(Glu). This chain is Glutamate--tRNA ligase, found in Escherichia coli (strain ATCC 8739 / DSM 1576 / NBRC 3972 / NCIMB 8545 / WDCM 00012 / Crooks).